Consider the following 375-residue polypeptide: Nicotinate-nucleotide--dimethylbenzimidazole phosphoribosyltransferase (375 aa).

The Proton acceptor role is filled by Glu323. Residues 344–375 are disordered; it reads LPEKPEELEAGEGPEAAEESSPEPENPEALAE. Positions 351–375 are enriched in acidic residues; sequence LEAGEGPEAAEESSPEPENPEALAE.

It belongs to the CobT family.

It catalyses the reaction 5,6-dimethylbenzimidazole + nicotinate beta-D-ribonucleotide = alpha-ribazole 5'-phosphate + nicotinate + H(+). It participates in nucleoside biosynthesis; alpha-ribazole biosynthesis; alpha-ribazole from 5,6-dimethylbenzimidazole: step 1/2. Its function is as follows. Catalyzes the synthesis of alpha-ribazole-5'-phosphate from nicotinate mononucleotide (NAMN) and 5,6-dimethylbenzimidazole (DMB). This is Nicotinate-nucleotide--dimethylbenzimidazole phosphoribosyltransferase from Streptomyces avermitilis (strain ATCC 31267 / DSM 46492 / JCM 5070 / NBRC 14893 / NCIMB 12804 / NRRL 8165 / MA-4680).